Consider the following 72-residue polypeptide: Translation initiation factor IF-1 (72 aa).

The region spanning 1 to 72 is the S1-like domain; the sequence is MSKEDSFEME…SKGRITYRAR (72 aa).

Belongs to the IF-1 family. In terms of assembly, component of the 30S ribosomal translation pre-initiation complex which assembles on the 30S ribosome in the order IF-2 and IF-3, IF-1 and N-formylmethionyl-tRNA(fMet); mRNA recruitment can occur at any time during PIC assembly.

The protein localises to the cytoplasm. Its function is as follows. One of the essential components for the initiation of protein synthesis. Stabilizes the binding of IF-2 and IF-3 on the 30S subunit to which N-formylmethionyl-tRNA(fMet) subsequently binds. Helps modulate mRNA selection, yielding the 30S pre-initiation complex (PIC). Upon addition of the 50S ribosomal subunit IF-1, IF-2 and IF-3 are released leaving the mature 70S translation initiation complex. This is Translation initiation factor IF-1 from Pseudomonas syringae pv. tomato (strain ATCC BAA-871 / DC3000).